Consider the following 594-residue polypeptide: Potassium-transporting ATPase potassium-binding subunit (594 aa).

Transmembrane regions (helical) follow at residues 3–23 (ADFLGLLLLYLAILLCAAPLL), 67–87 (AVAMLVFNVLGVLAVYALQRL), 136–156 (ALTVQNFVSAATGIAVLIALV), 179–199 (LYVLLPLSFILALALVSQGVV), 287–307 (LEMLAILLIPAALCWTFGEMV), 314–334 (VAILAAMTVLFAGFSASAAYF), 415–435 (GLYGMLAFAILAVFIAGLMIG), 453–473 (VALVILATPALVLAGTAVAVL), 519–539 (VLLGLAMWFGRYTIIVAILAL), and 562–582 (LFVALLVGAVLLVGALTYVPA).

It belongs to the KdpA family. As to quaternary structure, the system is composed of three essential subunits: KdpA, KdpB and KdpC.

It localises to the cell inner membrane. Part of the high-affinity ATP-driven potassium transport (or Kdp) system, which catalyzes the hydrolysis of ATP coupled with the electrogenic transport of potassium into the cytoplasm. This subunit binds the periplasmic potassium ions and delivers the ions to the membrane domain of KdpB through an intramembrane tunnel. The chain is Potassium-transporting ATPase potassium-binding subunit from Bordetella bronchiseptica (strain ATCC BAA-588 / NCTC 13252 / RB50) (Alcaligenes bronchisepticus).